Reading from the N-terminus, the 381-residue chain is Cytochrome b (381 aa).

4 helical membrane-spanning segments follow: residues 34–54 (FGSL…FLAM), 78–99 (WLIR…YLHI), 114–134 (WNTG…GYVL), and 179–199 (FFTF…VHLL). The heme b site is built by His-84 and His-98. Residues His-183 and His-197 each contribute to the heme b site. An a ubiquinone-binding site is contributed by His-202. 4 consecutive transmembrane segments (helical) span residues 227–247 (YKDL…TLFS), 289–309 (LGGV…PTLH), 321–341 (LTQI…WIGG), and 348–368 (FIII…LLMP).

It belongs to the cytochrome b family. In terms of assembly, the cytochrome bc1 complex contains 3 respiratory subunits (MT-CYB, CYC1 and UQCRFS1), 2 core proteins (UQCRC1 and UQCRC2) and probably 6 low-molecular weight proteins. Heme b is required as a cofactor.

The protein localises to the mitochondrion inner membrane. Component of the ubiquinol-cytochrome c reductase complex (complex III or cytochrome b-c1 complex) that is part of the mitochondrial respiratory chain. The b-c1 complex mediates electron transfer from ubiquinol to cytochrome c. Contributes to the generation of a proton gradient across the mitochondrial membrane that is then used for ATP synthesis. This Chelonia mydas (Green sea-turtle) protein is Cytochrome b (MT-CYB).